Consider the following 278-residue polypeptide: Tryptophan synthase alpha chain (278 aa).

Residues glutamate 50 and aspartate 61 each act as proton acceptor in the active site.

It belongs to the TrpA family. As to quaternary structure, tetramer of two alpha and two beta chains.

It carries out the reaction (1S,2R)-1-C-(indol-3-yl)glycerol 3-phosphate + L-serine = D-glyceraldehyde 3-phosphate + L-tryptophan + H2O. The protein operates within amino-acid biosynthesis; L-tryptophan biosynthesis; L-tryptophan from chorismate: step 5/5. In terms of biological role, the alpha subunit is responsible for the aldol cleavage of indoleglycerol phosphate to indole and glyceraldehyde 3-phosphate. This chain is Tryptophan synthase alpha chain, found in Nitrobacter winogradskyi (strain ATCC 25391 / DSM 10237 / CIP 104748 / NCIMB 11846 / Nb-255).